A 108-amino-acid polypeptide reads, in one-letter code: Thioredoxin (108 aa).

Residues 2 to 108 enclose the Thioredoxin domain; that stretch reads SEHIVNVTDA…QLAAFLDANI (107 aa). An intrachain disulfide couples cysteine 33 to cysteine 36.

The protein belongs to the thioredoxin family.

In terms of biological role, participates in various redox reactions through the reversible oxidation of its active center dithiol to a disulfide and catalyzes dithiol-disulfide exchange reactions. This is Thioredoxin (trxA) from Pseudomonas aeruginosa (strain ATCC 15692 / DSM 22644 / CIP 104116 / JCM 14847 / LMG 12228 / 1C / PRS 101 / PAO1).